The chain runs to 80 residues: Photosystem II extrinsic protein V (80 aa).

Residue Met-47 participates in heme binding.

Belongs to the cytochrome c family. PsbV subfamily. As to quaternary structure, PSII is composed of 1 copy each of membrane proteins PsbA, PsbB, PsbC, PsbD, PsbE, PsbF, PsbH, PsbI, PsbJ, PsbK, PsbL, PsbM, PsbT, PsbY, PsbZ, Psb30/Ycf12, at least 3 peripheral proteins of the oxygen-evolving complex and a large number of cofactors. It forms dimeric complexes. It depends on heme as a cofactor.

Its subcellular location is the plastid. It is found in the chloroplast thylakoid membrane. Its function is as follows. One of the extrinsic, lumenal subunits of photosystem II (PSII). PSII is a light-driven water plastoquinone oxidoreductase, using light energy to abstract electrons from H(2)O, generating a proton gradient subsequently used for ATP formation. The extrinsic proteins stabilize the structure of photosystem II oxygen-evolving complex (OEC), the ion environment of oxygen evolution and protect the OEC against heat-induced inactivation. The chain is Photosystem II extrinsic protein V from Thalassiosira weissflogii (Marine diatom).